The primary structure comprises 719 residues: Cyclin-dependent kinase 11.1 (719 aa).

Composition is skewed to basic and acidic residues over residues 1-20 (MSDH…ESHK), 38-48 (KGLESKMRESI), and 78-129 (KAKE…DQKV). Disordered stretches follow at residues 1 to 215 (MSDH…KDDD) and 231 to 315 (EEKE…EMTE). Basic residues predominate over residues 130 to 140 (HEHRHHHHHRK). A compositionally biased stretch (basic and acidic residues) spans 141 to 163 (HETDGHRTNRSNRDRSSERDSEK). Residues 164-174 (HKRHIDRHKKS) are compositionally biased toward basic residues. 2 stretches are compositionally biased toward basic and acidic residues: residues 191-215 (HTDV…KDDD) and 264-274 (DDTKPKSPGKA). The span at 275-285 (EDDDDVIEVLD) shows a compositional bias: acidic residues. Residues 356–647 (YECVNRVDEG…ATQALDHEWF (292 aa)) form the Protein kinase domain. ATP-binding positions include 362–370 (VDEGTFGVV) and K385. D484 (proton acceptor) is an active-site residue. Residues 657 to 689 (EEFPTFPAKSEQNKAPPPAKQKQQENRISHVDP) are disordered. Residues 678 to 689 (KQQENRISHVDP) are compositionally biased toward basic and acidic residues.

It belongs to the protein kinase superfamily. CMGC Ser/Thr protein kinase family. CDC2/CDKX subfamily. Broadly expressed in somatic and germ line cells (at protein level). Not expressed in sperm (at protein level).

It localises to the nucleus. The enzyme catalyses L-seryl-[protein] + ATP = O-phospho-L-seryl-[protein] + ADP + H(+). It carries out the reaction L-threonyl-[protein] + ATP = O-phospho-L-threonyl-[protein] + ADP + H(+). Functionally, probable cyclin-dependent kinase whose activity is most likely regulated by the cyclin cyl-1/Cylin-L. Important for normal oocyte and sperm development; probably required during multiple stages of gametogenesis. Plays a role in the activation of RAS-ERK signaling in the germ line. Also acts partially redundantly with cdk-11.2 to ensure embryonic viability. This Caenorhabditis elegans protein is Cyclin-dependent kinase 11.1.